The primary structure comprises 583 residues: Nuclear distribution protein nudE homolog 1 (583 aa).

A coiled-coil region spans residues 14–195 (ATLEDTLGWY…QDKFKKQESR (182 aa)). Disordered stretches follow at residues 34–68 (LAEF…KAET), 211–339 (TFDG…TSNS), and 358–583 (HSVR…GETY). Residues 35-67 (AEFRDSSRELEQELEKDIERAEKQERHHQEKAE) are compositionally biased toward basic and acidic residues. Composition is skewed to polar residues over residues 219–235 (PGST…TDSK), 279–319 (RSRL…TMRT), 329–339 (SASNKLPTSNS), 379–392 (NVYS…SITI), and 399–422 (SGSA…STPK). Positions 453 to 469 (RPSSRASTSYATSYARP) are enriched in low complexity. Positions 529–538 (RRGTYSSQGG) are enriched in polar residues.

The protein belongs to the nudE family. In terms of assembly, self-associates. Interacts with PAC1.

It is found in the cytoplasm. It localises to the cytoskeleton. Functionally, required for nuclear migration. The protein is Nuclear distribution protein nudE homolog 1 (NDE1) of Gibberella zeae (strain ATCC MYA-4620 / CBS 123657 / FGSC 9075 / NRRL 31084 / PH-1) (Wheat head blight fungus).